The following is a 190-amino-acid chain: MVRVVPLTDEEKMSIVSGLRSSVPATKLVTLRKLQEIAEVRPEAILYLDTYDKVTLNEIITLLNQIIEYDPDEILRREAMITLEKVKKALGTKFSTFVPLCNSCKSPIDLGWTYCTNCGAEIKNMTFEEEVERCPNCNNYISDSWKYCAHCGAKLKEEEEEVLRCPNCKRPVQPEWIVCPYCGYRLKRKP.

Residues 134 to 183 (CPNCNNYISDSWKYCAHCGAKLKEEEEEVLRCPNCKRPVQPEWIVCPYCG) form a DZANK-type zinc finger.

This is Double zinc ribbon protein MJ0416 from Methanocaldococcus jannaschii (strain ATCC 43067 / DSM 2661 / JAL-1 / JCM 10045 / NBRC 100440) (Methanococcus jannaschii).